Reading from the N-terminus, the 145-residue chain is D-aminoacyl-tRNA deacylase (145 aa).

The Gly-cisPro motif, important for rejection of L-amino acids motif lies at 137–138 (GP).

Belongs to the DTD family. In terms of assembly, homodimer.

Its subcellular location is the cytoplasm. It catalyses the reaction glycyl-tRNA(Ala) + H2O = tRNA(Ala) + glycine + H(+). The enzyme catalyses a D-aminoacyl-tRNA + H2O = a tRNA + a D-alpha-amino acid + H(+). In terms of biological role, an aminoacyl-tRNA editing enzyme that deacylates mischarged D-aminoacyl-tRNAs. Also deacylates mischarged glycyl-tRNA(Ala), protecting cells against glycine mischarging by AlaRS. Acts via tRNA-based rather than protein-based catalysis; rejects L-amino acids rather than detecting D-amino acids in the active site. By recycling D-aminoacyl-tRNA to D-amino acids and free tRNA molecules, this enzyme counteracts the toxicity associated with the formation of D-aminoacyl-tRNA entities in vivo and helps enforce protein L-homochirality. The sequence is that of D-aminoacyl-tRNA deacylase from Salmonella enteritidis PT4 (strain P125109).